The primary structure comprises 200 residues: Large ribosomal subunit protein bL25 (200 aa).

It belongs to the bacterial ribosomal protein bL25 family. CTC subfamily. Part of the 50S ribosomal subunit; part of the 5S rRNA/L5/L18/L25 subcomplex. Contacts the 5S rRNA. Binds to the 5S rRNA independently of L5 and L18.

In terms of biological role, this is one of the proteins that binds to the 5S RNA in the ribosome where it forms part of the central protuberance. In Pseudomonas fluorescens (strain SBW25), this protein is Large ribosomal subunit protein bL25.